The primary structure comprises 1044 residues: Isoleucine--tRNA ligase (1044 aa).

Residues 48-58 (PFATGLPHFGH) carry the 'HIGH' region motif. The 'KMSKS' region motif lies at 594 to 598 (KMSKS). K597 contributes to the ATP binding site.

The protein belongs to the class-I aminoacyl-tRNA synthetase family. IleS type 2 subfamily. In terms of assembly, monomer. It depends on Zn(2+) as a cofactor.

It is found in the cytoplasm. It carries out the reaction tRNA(Ile) + L-isoleucine + ATP = L-isoleucyl-tRNA(Ile) + AMP + diphosphate. In terms of biological role, catalyzes the attachment of isoleucine to tRNA(Ile). As IleRS can inadvertently accommodate and process structurally similar amino acids such as valine, to avoid such errors it has two additional distinct tRNA(Ile)-dependent editing activities. One activity is designated as 'pretransfer' editing and involves the hydrolysis of activated Val-AMP. The other activity is designated 'posttransfer' editing and involves deacylation of mischarged Val-tRNA(Ile). The sequence is that of Isoleucine--tRNA ligase from Borrelia hermsii (strain HS1 / DAH).